Consider the following 359-residue polypeptide: 3-isopropylmalate dehydrogenase (359 aa).

Position 76–89 (76–89) interacts with NAD(+); sequence GPKWDTIERSIRPE. R96, R106, R134, and D225 together coordinate substrate. Mg(2+) is bound by residues D225, D249, and D253. 283 to 295 is an NAD(+) binding site; sequence GSAPDIAGQNVAN.

This sequence belongs to the isocitrate and isopropylmalate dehydrogenases family. LeuB type 1 subfamily. As to quaternary structure, homodimer. Mg(2+) serves as cofactor. Mn(2+) is required as a cofactor.

The protein resides in the cytoplasm. The enzyme catalyses (2R,3S)-3-isopropylmalate + NAD(+) = 4-methyl-2-oxopentanoate + CO2 + NADH. It functions in the pathway amino-acid biosynthesis; L-leucine biosynthesis; L-leucine from 3-methyl-2-oxobutanoate: step 3/4. In terms of biological role, catalyzes the oxidation of 3-carboxy-2-hydroxy-4-methylpentanoate (3-isopropylmalate) to 3-carboxy-4-methyl-2-oxopentanoate. The product decarboxylates to 4-methyl-2 oxopentanoate. The polypeptide is 3-isopropylmalate dehydrogenase (Acinetobacter baylyi (strain ATCC 33305 / BD413 / ADP1)).